Here is a 314-residue protein sequence, read N- to C-terminus: Putative S-adenosyl-L-methionine-dependent methyltransferase MAP_0256 (314 aa).

S-adenosyl-L-methionine is bound by residues aspartate 132 and 161 to 162; that span reads DL.

It belongs to the UPF0677 family.

Its function is as follows. Exhibits S-adenosyl-L-methionine-dependent methyltransferase activity. In Mycolicibacterium paratuberculosis (strain ATCC BAA-968 / K-10) (Mycobacterium paratuberculosis), this protein is Putative S-adenosyl-L-methionine-dependent methyltransferase MAP_0256.